The following is a 345-amino-acid chain: Protein RecA (345 aa).

Position 66–73 (66–73 (GPESSGKT)) interacts with ATP.

Belongs to the RecA family.

The protein localises to the cytoplasm. Can catalyze the hydrolysis of ATP in the presence of single-stranded DNA, the ATP-dependent uptake of single-stranded DNA by duplex DNA, and the ATP-dependent hybridization of homologous single-stranded DNAs. It interacts with LexA causing its activation and leading to its autocatalytic cleavage. In Helicobacter hepaticus (strain ATCC 51449 / 3B1), this protein is Protein RecA.